The chain runs to 382 residues: Nitric oxide reductase FlRd-NAD(+) reductase (382 aa).

It belongs to the FAD-dependent oxidoreductase family. FAD serves as cofactor.

The protein resides in the cytoplasm. It carries out the reaction 2 reduced [nitric oxide reductase rubredoxin domain] + NAD(+) + H(+) = 2 oxidized [nitric oxide reductase rubredoxin domain] + NADH. The protein operates within nitrogen metabolism; nitric oxide reduction. One of at least two accessory proteins for anaerobic nitric oxide (NO) reductase. Reduces the rubredoxin moiety of NO reductase. This Vibrio vulnificus (strain YJ016) protein is Nitric oxide reductase FlRd-NAD(+) reductase.